The sequence spans 279 residues: MDFSPSSELGFHFVAFILLTRHRTAFPASGKKRETDYSDGDPLDVHKRLPSSAGEDRAVMLGFAMMGFSVLMFFLLGTTILKPFMLSIQREESTCTAIHTDIMDDWLDCAFTCGVHCHGQGKYPCLQVFVNLSHPGQKALLHYNEEAVQINPKCFYTPKCHQDRNDLLNSALDIKEFFDHKNGTPFSCFYSPASQSEDVILIKKYDQMAIFHCLFWPSLTLLGGALIVGMVRLTQHLSLLCEKYSTVVRDEVGGKVPYIEQHQFKLCIMRRSKGRAEKS.

The Cytoplasmic segment spans residues M1–M60. A helical membrane pass occupies residues L61–L81. At K82 to Q207 the chain is on the extracellular side. N131 is a glycosylation site (N-linked (GlcNAc...) asparagine). Residues M208–V228 traverse the membrane as a helical segment. The Cytoplasmic portion of the chain corresponds to G229–S279.

Belongs to the KCNMB (TC 8.A.14.1) family. KCNMB3 subfamily. In terms of assembly, interacts with KCNMA1 tetramer. There are probably 4 molecules of KCMNB3 per KCNMA1 tetramer. Post-translationally, N-glycosylated. In terms of processing, the extracellular domain contains disulfide bond essential for the gating mechanism. Isoform 1, isoform 3 and isoform 4 are widely expressed. Isoform 2 is expressed placenta, pancreas, kidney and heart. Isoform 1 and isoform 3 are highly expressed in pancreas and testis.

The protein resides in the membrane. In terms of biological role, regulatory subunit of the calcium activated potassium KCNMA1 (maxiK) channel. Modulates the calcium sensitivity and gating kinetics of KCNMA1, thereby contributing to KCNMA1 channel diversity. Alters the functional properties of the current expressed by the KCNMA1 channel. Isoform 2, isoform 3 and isoform 4 partially inactivate the current of KCNBMA. Isoform 4 induces a fast and incomplete inactivation of KCNMA1 channel that is detectable only at large depolarizations. In contrast, isoform 1 does not induce detectable inactivation of KCNMA1. Two or more subunits of KCNMB3 are required to block the KCNMA1 tetramer. The chain is Calcium-activated potassium channel subunit beta-3 (KCNMB3) from Homo sapiens (Human).